A 188-amino-acid polypeptide reads, in one-letter code: MSTPSLLAIGLGNPGAEYEDTRHNVGHQVIDGLSGRLDISLQHQSDALVGWGRYVDQKIGLAVPLTYMNRSGDAVAGLRAHYDLPIDRLLVIVDDLHLPVGTIRLRPTGSSGGHNGLAHVAQRLGTTEFSRLRVGIGNDFPEGRQSDYVLSPFTDEQRPAARSAREDAEDAVLTMARDDIDAAMNRFN.

Tyr18 serves as a coordination point for tRNA. The active-site Proton acceptor is the His23. Positions 67, 69, and 115 each coordinate tRNA.

This sequence belongs to the PTH family. In terms of assembly, monomer.

It localises to the cytoplasm. It catalyses the reaction an N-acyl-L-alpha-aminoacyl-tRNA + H2O = an N-acyl-L-amino acid + a tRNA + H(+). Hydrolyzes ribosome-free peptidyl-tRNAs (with 1 or more amino acids incorporated), which drop off the ribosome during protein synthesis, or as a result of ribosome stalling. Its function is as follows. Catalyzes the release of premature peptidyl moieties from peptidyl-tRNA molecules trapped in stalled 50S ribosomal subunits, and thus maintains levels of free tRNAs and 50S ribosomes. In Salinibacter ruber (strain DSM 13855 / M31), this protein is Peptidyl-tRNA hydrolase.